Here is a 237-residue protein sequence, read N- to C-terminus: Phosphoribosylaminoimidazole-succinocarboxamide synthase (237 aa).

It belongs to the SAICAR synthetase family.

It carries out the reaction 5-amino-1-(5-phospho-D-ribosyl)imidazole-4-carboxylate + L-aspartate + ATP = (2S)-2-[5-amino-1-(5-phospho-beta-D-ribosyl)imidazole-4-carboxamido]succinate + ADP + phosphate + 2 H(+). Its pathway is purine metabolism; IMP biosynthesis via de novo pathway; 5-amino-1-(5-phospho-D-ribosyl)imidazole-4-carboxamide from 5-amino-1-(5-phospho-D-ribosyl)imidazole-4-carboxylate: step 1/2. The chain is Phosphoribosylaminoimidazole-succinocarboxamide synthase from Pseudomonas fluorescens (strain ATCC BAA-477 / NRRL B-23932 / Pf-5).